The primary structure comprises 329 residues: DNA-directed RNA polymerase subunit alpha (329 aa).

Residues 1-235 form an alpha N-terminal domain (alpha-NTD) region; it reads MQNSIIGFLK…EQLEAFVDLR (235 aa). Residues 249 to 329 are alpha C-terminal domain (alpha-CTD); the sequence is FEPILLRPVD…KWPPSSILEE (81 aa).

It belongs to the RNA polymerase alpha chain family. Homodimer. The RNAP catalytic core consists of 2 alpha, 1 beta, 1 beta' and 1 omega subunit. When a sigma factor is associated with the core the holoenzyme is formed, which can initiate transcription.

It carries out the reaction RNA(n) + a ribonucleoside 5'-triphosphate = RNA(n+1) + diphosphate. In terms of biological role, DNA-dependent RNA polymerase catalyzes the transcription of DNA into RNA using the four ribonucleoside triphosphates as substrates. This is DNA-directed RNA polymerase subunit alpha from Buchnera aphidicola subsp. Schizaphis graminum (strain Sg).